We begin with the raw amino-acid sequence, 488 residues long: Protein nucleotidyltransferase YdiU (488 aa).

The ATP site is built by G91, G93, R94, K114, D126, G127, R177, and R184. D253 acts as the Proton acceptor in catalysis. Positions 254 and 263 each coordinate Mg(2+). An ATP-binding site is contributed by D263.

Belongs to the SELO family. Mg(2+) is required as a cofactor. It depends on Mn(2+) as a cofactor.

It carries out the reaction L-seryl-[protein] + ATP = 3-O-(5'-adenylyl)-L-seryl-[protein] + diphosphate. The catalysed reaction is L-threonyl-[protein] + ATP = 3-O-(5'-adenylyl)-L-threonyl-[protein] + diphosphate. It catalyses the reaction L-tyrosyl-[protein] + ATP = O-(5'-adenylyl)-L-tyrosyl-[protein] + diphosphate. The enzyme catalyses L-histidyl-[protein] + UTP = N(tele)-(5'-uridylyl)-L-histidyl-[protein] + diphosphate. It carries out the reaction L-seryl-[protein] + UTP = O-(5'-uridylyl)-L-seryl-[protein] + diphosphate. The catalysed reaction is L-tyrosyl-[protein] + UTP = O-(5'-uridylyl)-L-tyrosyl-[protein] + diphosphate. Its function is as follows. Nucleotidyltransferase involved in the post-translational modification of proteins. It can catalyze the addition of adenosine monophosphate (AMP) or uridine monophosphate (UMP) to a protein, resulting in modifications known as AMPylation and UMPylation. The sequence is that of Protein nucleotidyltransferase YdiU from Bacillus cereus (strain AH187).